The chain runs to 317 residues: Protease HtpX homolog (317 aa).

The next 2 membrane-spanning stretches (helical) occupy residues 14-34 (LMGI…LYYI) and 41-61 (IALL…QWLF). Residue His146 participates in Zn(2+) binding. Residue Glu147 is part of the active site. His150 serves as a coordination point for Zn(2+). A run of 2 helical transmembrane segments spans residues 158-178 (MLLA…TLLF) and 189-209 (IVLL…LILA). Glu215 is a Zn(2+) binding site.

This sequence belongs to the peptidase M48B family. It depends on Zn(2+) as a cofactor.

Its subcellular location is the cell membrane. The polypeptide is Protease HtpX homolog (Thermoplasma acidophilum (strain ATCC 25905 / DSM 1728 / JCM 9062 / NBRC 15155 / AMRC-C165)).